The chain runs to 399 residues: Phosphoglycerate kinase (399 aa).

Substrate contacts are provided by residues 24–26 (DYN), Arg-39, 62–65 (HLGR), Arg-121, and Arg-154. ATP contacts are provided by residues Lys-204, Gly-295, Glu-326, and 355–358 (GGDS).

This sequence belongs to the phosphoglycerate kinase family. As to quaternary structure, monomer.

It is found in the cytoplasm. The catalysed reaction is (2R)-3-phosphoglycerate + ATP = (2R)-3-phospho-glyceroyl phosphate + ADP. Its pathway is carbohydrate degradation; glycolysis; pyruvate from D-glyceraldehyde 3-phosphate: step 2/5. This is Phosphoglycerate kinase from Elusimicrobium minutum (strain Pei191).